Here is a 681-residue protein sequence, read N- to C-terminus: Peroxisomal acyl-coenzyme A oxidase 2 (681 aa).

Ser3 and Ser9 each carry phosphoserine. Thr13 is modified (phosphothreonine). 4 positions are modified to N6-succinyllysine: Lys66, Lys137, Lys453, and Lys561. Residues 679–681 (SKL) carry the Microbody targeting signal motif.

The protein belongs to the acyl-CoA oxidase family. In terms of assembly, homodimer. Requires FAD as cofactor. Present in all tissues tested: heart, brain, placenta, lung, liver, skeletal muscle, kidney and pancreas. Most abundant in heart, liver and kidney.

The protein resides in the peroxisome. It catalyses the reaction (25R)-3alpha,7alpha,12alpha-trihydroxy-5beta-cholestan-26-oyl-CoA + A + H2O = (24R,25R)-3alpha,7alpha,12alpha,24-tetrahydroxy-5beta-cholestan-26-oyl-CoA + AH2. The catalysed reaction is (25S)-3alpha,7alpha,12alpha-trihydroxy-5beta-cholestan-26-oyl-CoA + O2 = (24E)-3alpha,7alpha,12alpha-trihydroxy-5beta-cholest-24-en-26-oyl-CoA + H2O2. Functionally, oxidizes the CoA esters of the bile acid intermediates di- and tri-hydroxycholestanoic acids. Capable of oxidizing short as well as long chain 2-methyl branched fatty acids. This Homo sapiens (Human) protein is Peroxisomal acyl-coenzyme A oxidase 2.